A 209-amino-acid polypeptide reads, in one-letter code: Inducible T-cell costimulator (209 aa).

The signal sequence occupies residues 1–19 (MKSDLRYFFLFCIQVEILA). Residues 20 to 141 (GEFNDSAASE…YESELCCQLK (122 aa)) are Extracellular-facing. Asparagine 23 carries an N-linked (GlcNAc...) asparagine glycan. Positions 30 to 133 (MFIFHNGGVQ…LSREYLNIYE (104 aa)) constitute an Ig-like V-type domain. Disulfide bonds link cysteine 42–cysteine 109 and cysteine 63–cysteine 83. N-linked (GlcNAc...) asparagine glycosylation is present at asparagine 89. A helical membrane pass occupies residues 142–162 (FWLPIGCAAFVTVCVFGCVLM).

As to quaternary structure, homodimer; disulfide-linked. Interacts with ICOSLG. Interacts with PIK3R1. Interacts with TBK1; this interaction is critical for the maturation of T follicular regulatory cells. N-glycosylated.

It is found in the cell membrane. Functionally, stimulatory receptor expressed in activated or antigen-experienced T-cells that plays an important role in the immune response. Upon binding to its ligand ICOSL expressed on antigen presenting cells (APCs), delivers costimulatory signals that enhances all basic T-cell responses to a foreign antigen, namely proliferation, secretion of lymphokines including IL10, up-regulation of molecules that mediate cell-cell interaction, and effective help for antibody secretion by B-cells. Also acts as a costimulatory receptor critical for the differentiation of T follicular regulatory cells upon immune challenges such as viral infection. Mechanistically, potentiates TCR-induced calcium flux by augmenting PLCG1 activation and actin remodeling. In addition, activates PI3K signaling pathways independently of calcium flux. Essential both for efficient interaction between T and B-cells and for normal antibody responses to T-cell dependent antigens. Prevents the apoptosis of pre-activated T-cells. Plays a critical role in CD40-mediated class switching of immunoglobin isotypes. This chain is Inducible T-cell costimulator (ICOS), found in Bos taurus (Bovine).